The chain runs to 216 residues: ATP phosphoribosyltransferase (216 aa).

The protein belongs to the ATP phosphoribosyltransferase family. Short subfamily. In terms of assembly, heteromultimer composed of HisG and HisZ subunits.

It localises to the cytoplasm. It catalyses the reaction 1-(5-phospho-beta-D-ribosyl)-ATP + diphosphate = 5-phospho-alpha-D-ribose 1-diphosphate + ATP. It participates in amino-acid biosynthesis; L-histidine biosynthesis; L-histidine from 5-phospho-alpha-D-ribose 1-diphosphate: step 1/9. Functionally, catalyzes the condensation of ATP and 5-phosphoribose 1-diphosphate to form N'-(5'-phosphoribosyl)-ATP (PR-ATP). Has a crucial role in the pathway because the rate of histidine biosynthesis seems to be controlled primarily by regulation of HisG enzymatic activity. This Prochlorococcus marinus (strain MIT 9211) protein is ATP phosphoribosyltransferase.